The chain runs to 186 residues: Phosphopantetheine adenylyltransferase (186 aa).

Thr14 lines the substrate pocket. ATP contacts are provided by residues 14 to 15 (TF) and His22. 3 residues coordinate substrate: Lys46, Leu78, and Arg92. ATP-binding positions include 93–95 (GLR), Glu103, and 128–134 (WLYISST).

It belongs to the bacterial CoaD family. In terms of assembly, homohexamer. It depends on Mg(2+) as a cofactor.

The protein localises to the cytoplasm. It catalyses the reaction (R)-4'-phosphopantetheine + ATP + H(+) = 3'-dephospho-CoA + diphosphate. The protein operates within cofactor biosynthesis; coenzyme A biosynthesis; CoA from (R)-pantothenate: step 4/5. In terms of biological role, reversibly transfers an adenylyl group from ATP to 4'-phosphopantetheine, yielding dephospho-CoA (dPCoA) and pyrophosphate. The polypeptide is Phosphopantetheine adenylyltransferase (Nitratidesulfovibrio vulgaris (strain ATCC 29579 / DSM 644 / CCUG 34227 / NCIMB 8303 / VKM B-1760 / Hildenborough) (Desulfovibrio vulgaris)).